The primary structure comprises 465 residues: MTIHIYNTLTRQKEEFIPLEENKVKMYVCGPTVYNYIHIGNARPPMVFDTVRRYLEYKGYDVQYVSNFTDVDDKLIKAANELGEDVPTIADRFVEAYFEDVTALGCKHATVHPRVTENMDIIIEFIQELVNKGYAYESEGDVYFRTKEFEGYGKLSHQPIADLRHGARIEVGEKKQDPLDFALWKAAKEGEIFWESPWGQGRPGWHIECSAMARKYLGDTIDIHAGGQDLAFPHHENEIAQSEALTGKTFARYWMHNGYININNEKMSKSLGNFILVHDIIKQYDPQLIRFFMLSVHYRHPINFSEELLRSTNNGLERIKTAYGNLKHRMESSTDLTDHDEKWLADLKKFQTAFEEAMNDDFNTANAITELYNVANHANQYLLEEHTSTVVIQAYVKQLETLFDILGLELAQEELLDEEIEALIQKRIEARKNRDFALSDQIRDDLKDRNIILEDTAQGTRWKRG.

Residue Cys29 coordinates Zn(2+). The 'HIGH' region motif lies at 31-41; the sequence is PTVYNYIHIGN. The Zn(2+) site is built by Cys209, His234, and Glu238. Residues 266–270 carry the 'KMSKS' region motif; it reads KMSKS. ATP is bound at residue Lys269. Phosphoserine is present on Ser270.

Belongs to the class-I aminoacyl-tRNA synthetase family. Monomer. Zn(2+) serves as cofactor.

It is found in the cytoplasm. It carries out the reaction tRNA(Cys) + L-cysteine + ATP = L-cysteinyl-tRNA(Cys) + AMP + diphosphate. The polypeptide is Cysteine--tRNA ligase (Bacillus cereus (strain AH187)).